The following is a 190-amino-acid chain: Elongation factor P-like protein (190 aa).

This sequence belongs to the elongation factor P family.

The chain is Elongation factor P-like protein from Pseudoalteromonas atlantica (strain T6c / ATCC BAA-1087).